A 124-amino-acid chain; its full sequence is Class I hydrophobin 1 (124 aa).

The signal sequence occupies residues 1 to 18; that stretch reads MRFSIATVVLSLAAMVVA. Cystine bridges form between Cys35/Cys85, Cys43/Cys79, Cys44/Cys63, and Cys86/Cys97.

It belongs to the fungal hydrophobin family.

It localises to the secreted. It is found in the cell wall. Its function is as follows. Aerial growth, conidiation, and dispersal of filamentous fungi in the environment rely upon a capability of their secreting small amphipathic proteins called hydrophobins (HPBs) with low sequence identity. Class I can self-assemble into an outermost layer of rodlet bundles on aerial cell surfaces, conferring cellular hydrophobicity that supports fungal growth, development and dispersal; whereas Class II form highly ordered films at water-air interfaces through intermolecular interactions but contribute nothing to the rodlet structure. In Botryotinia fuckeliana, hydrophobins are not involved in conferring surface hydrophobicity to conidia and aerial hyphae and their function in sclerotia and fruiting bodies remains to be investigated. This Botryotinia fuckeliana (strain B05.10) (Noble rot fungus) protein is Class I hydrophobin 1 (Bhp1).